The primary structure comprises 91 residues: Small ribosomal subunit protein uS19c (91 aa).

This sequence belongs to the universal ribosomal protein uS19 family.

The protein resides in the plastid. It localises to the organellar chromatophore. Its function is as follows. Protein S19 forms a complex with S13 that binds strongly to the 16S ribosomal RNA. In Paulinella chromatophora, this protein is Small ribosomal subunit protein uS19c.